The chain runs to 89 residues: Small ribosomal subunit protein uS14 (89 aa).

Belongs to the universal ribosomal protein uS14 family. Part of the 30S ribosomal subunit. Contacts proteins S3 and S10.

In terms of biological role, binds 16S rRNA, required for the assembly of 30S particles and may also be responsible for determining the conformation of the 16S rRNA at the A site. In Chlorobium phaeovibrioides (strain DSM 265 / 1930) (Prosthecochloris vibrioformis (strain DSM 265)), this protein is Small ribosomal subunit protein uS14.